A 314-amino-acid chain; its full sequence is Galectin-12 (314 aa).

Galectin domains follow at residues 27–161 and 190–314; these read YGTT…VGFL and CSRA…CVHC.

It is found in the nucleus. In terms of biological role, binds lactose. May participate in the apoptosis of adipocytes. In Mus musculus (Mouse), this protein is Galectin-12 (Lgals12).